The following is a 631-amino-acid chain: tRNA uridine 5-carboxymethylaminomethyl modification enzyme MnmG (631 aa).

Residues 13–18, Val-125, and Ser-180 each bind FAD; that span reads GGGHAG. Residue 273–287 coordinates NAD(+); it reads GPRYCPSIEDKVMRF. FAD is bound at residue Gln-370.

This sequence belongs to the MnmG family. As to quaternary structure, homodimer. Heterotetramer of two MnmE and two MnmG subunits. FAD is required as a cofactor.

It is found in the cytoplasm. Functionally, NAD-binding protein involved in the addition of a carboxymethylaminomethyl (cmnm) group at the wobble position (U34) of certain tRNAs, forming tRNA-cmnm(5)s(2)U34. The sequence is that of tRNA uridine 5-carboxymethylaminomethyl modification enzyme MnmG from Vibrio parahaemolyticus serotype O3:K6 (strain RIMD 2210633).